The primary structure comprises 222 residues: GEM-like protein 4 (222 aa).

One can recognise a GRAM domain in the interval 95–173; the sequence is KIFKRLFRVS…CKIDRVNQSQ (79 aa).

It belongs to the GEM family.

In Arabidopsis thaliana (Mouse-ear cress), this protein is GEM-like protein 4.